We begin with the raw amino-acid sequence, 173 residues long: 16S rRNA aminocarboxypropyltransferase (173 aa).

Threonine 25, leucine 72, leucine 96, and serine 115 together coordinate S-adenosyl-L-methionine.

Belongs to the TDD superfamily. TSR3 family.

The protein localises to the cytoplasm. It catalyses the reaction an N(1)-methylpseudouridine in rRNA + S-adenosyl-L-methionine = N(1)-methyl-N(3)-[(3S)-3-amino-3-carboxypropyl]pseudouridine in rRNA + S-methyl-5'-thioadenosine + H(+). In terms of biological role, aminocarboxypropyltransferase that catalyzes the aminocarboxypropyl transfer on pseudouridine corresponding to position 914 in M.jannaschii 16S rRNA. It constitutes the last step in biosynthesis of the hypermodified N1-methyl-N3-(3-amino-3-carboxypropyl) pseudouridine (m1acp3-Psi). The chain is 16S rRNA aminocarboxypropyltransferase from Methanococcoides burtonii (strain DSM 6242 / NBRC 107633 / OCM 468 / ACE-M).